A 330-amino-acid chain; its full sequence is Thiosulfate transporter TsuA (330 aa).

Topologically, residues 1–2 (MI) are periplasmic. A helical membrane pass occupies residues 3 to 18 (WTGLLVGFLFGIVLQR). Residues 19–36 (GRICFNSAFRDVLLFKDN) lie on the Cytoplasmic side of the membrane. Residues 37 to 59 (YLFKLAVFTLALEMILFVLLSQV) traverse the membrane as a helical segment. Over 60-70 (GLMQMNPKPLN) the chain is Periplasmic. The chain crosses the membrane as a helical span at residues 71–87 (LVGNIIGGFVFGLGMVL). Over 88 to 102 (AGGCASGVTYRVGEG) the chain is Cytoplasmic. A helical transmembrane segment spans residues 103–121 (LTTAWFAALFYGLGAYATK). Over 122-162 (SGAFSWWLSWVGQFKSPLSVEESAYYVKGAGPTISSVLGLN) the chain is Periplasmic. A helical membrane pass occupies residues 163–180 (PWIPALVIAALFILWAFG). At 181–189 (TKTTSRETK) the chain is on the cytoplasmic side. The chain crosses the membrane as a helical span at residues 190 to 211 (FNWKIASVCLALVAGLGFITST). The Periplasmic segment spans residues 212–239 (LSGRKYGLGITGGWINLFQGFLTNSPLN). The chain crosses the membrane as a helical span at residues 240-258 (WEGLEIVGIILGAGVAAAV). Over 259 to 269 (AGEFKLRMPKN) the chain is Cytoplasmic. Residues 270 to 289 (PVTYLQVGIGGLLMGIGAVT) traverse the membrane as a helical segment. The Periplasmic segment spans residues 290 to 306 (AGGCNIGHFLTGVPQLA). Residues 307-326 (LSSWLASIFFILGNWTMAWI) form a helical membrane-spanning segment. At 327–330 (LFRR) the chain is on the cytoplasmic side.

This sequence belongs to the TsuA/YedE (TC 9.B.102) family.

Its subcellular location is the cell inner membrane. The enzyme catalyses thiosulfate(in) = thiosulfate(out). Mediates thiosulfate uptake. The polypeptide is Thiosulfate transporter TsuA (Spirochaeta thermophila (strain ATCC 700085 / DSM 6578 / Z-1203)).